Consider the following 208-residue polypeptide: dITP/XTP pyrophosphatase (208 aa).

16–21 (SNNKGK) contributes to the substrate binding site. Asp-79 (proton acceptor) is an active-site residue. Mg(2+) is bound at residue Asp-79. Substrate-binding positions include Ser-80, 166–169 (FGYD), Lys-189, and 194–195 (HR).

This sequence belongs to the HAM1 NTPase family. As to quaternary structure, homodimer. It depends on Mg(2+) as a cofactor.

The catalysed reaction is XTP + H2O = XMP + diphosphate + H(+). The enzyme catalyses dITP + H2O = dIMP + diphosphate + H(+). It carries out the reaction ITP + H2O = IMP + diphosphate + H(+). Pyrophosphatase that catalyzes the hydrolysis of nucleoside triphosphates to their monophosphate derivatives, with a high preference for the non-canonical purine nucleotides XTP (xanthosine triphosphate), dITP (deoxyinosine triphosphate) and ITP. Seems to function as a house-cleaning enzyme that removes non-canonical purine nucleotides from the nucleotide pool, thus preventing their incorporation into DNA/RNA and avoiding chromosomal lesions. The sequence is that of dITP/XTP pyrophosphatase from Acinetobacter baumannii (strain ACICU).